A 601-amino-acid chain; its full sequence is DNA ligase (601 aa).

Residue Asp258 participates in ATP binding. Lys260 functions as the N6-AMP-lysine intermediate in the catalytic mechanism. ATP contacts are provided by Arg265, Arg280, Glu310, Phe350, Arg427, and Lys433.

Belongs to the ATP-dependent DNA ligase family. It depends on Mg(2+) as a cofactor. Ca(2+) is required as a cofactor. Mn(2+) serves as cofactor.

It carries out the reaction ATP + (deoxyribonucleotide)n-3'-hydroxyl + 5'-phospho-(deoxyribonucleotide)m = (deoxyribonucleotide)n+m + AMP + diphosphate.. DNA ligase that seals nicks in double-stranded DNA during DNA replication, DNA recombination and DNA repair. Also has low activity with dATP. Inactive with NAD(+), CTP, GTP, UTP, dCTP, dGTP or dTTP. This Saccharolobus shibatae (strain ATCC 51178 / DSM 5389 / JCM 8931 / NBRC 15437 / B12) (Sulfolobus shibatae) protein is DNA ligase.